The primary structure comprises 213 residues: Chloramphenicol acetyltransferase 3 (213 aa).

Catalysis depends on histidine 189, which acts as the Proton acceptor.

It belongs to the chloramphenicol acetyltransferase family. As to quaternary structure, homotrimer.

It carries out the reaction chloramphenicol + acetyl-CoA = chloramphenicol 3-acetate + CoA. Its function is as follows. This enzyme is an effector of chloramphenicol resistance in bacteria. The protein is Chloramphenicol acetyltransferase 3 (cat3) of Escherichia coli.